Here is a 506-residue protein sequence, read N- to C-terminus: MTQAVMLQGTASDVGKSVLAAGLCRIFYQDGLRTAPFKSQNMALNSGITPDGKEMGRAQIFQAEAAGITPDVRMNPVLLKPTSDRQAQVVLMGKVATNMDAVSYHDYKPRLREQILAVYNSLAQEYDVIVLEGAGSPAEINLRDRDIVNMGMAEMAQCPVILVADIDRGGVFAAIYGTLALLHKQERDRVKGVIINKFRGDVALLYSGIEQIESLTGVPVLGVMPWLDVDLEDEDGVALQNDKYRGNAPRDITIAIVQLPHISNFTDFNALAAQPDVRIRYIRRPEALTDADLVILPGSKNTLSDLAWLRESGMADAVLQTHRQGVPVMGICGGYQMLGDTIVDEVESGLGTQPGLGLLNAITRFAQDKTTTQVNATMSGELPGWLAAAAGLPVRGYEIHMGETVLQEGCCTAMTLQKNGCSVADGAVTADGLAFGTYLHGLFDSDAFTRAVVNGLRARKGLTPWETTFCYAEHKARQFDLLAEAMRQHIDIDKIYTIMQQHQEPV.

A GATase cobBQ-type domain is found at 251–448 (DITIAIVQLP…LHGLFDSDAF (198 aa)). Catalysis depends on cysteine 332, which acts as the Nucleophile. Residue histidine 440 is part of the active site.

The protein belongs to the CobB/CobQ family. CobQ subfamily.

It participates in cofactor biosynthesis; adenosylcobalamin biosynthesis. Catalyzes amidations at positions B, D, E, and G on adenosylcobyrinic A,C-diamide. NH(2) groups are provided by glutamine, and one molecule of ATP is hydrogenolyzed for each amidation. The protein is Cobyric acid synthase of Salmonella agona (strain SL483).